The primary structure comprises 557 residues: MGQARPAARRPHSPDPGAQPAPPRRRARALALLGALLAAAAAVAAARACALLADAQAAARQESALKVLGTDGLFLFSSLDTDQDMYISPEEFKPIAEKLTGSVPVANYEEEELPHDPSEETLTIEARFQPLLMETMTKSKDGFLGVSRLALSGLRNWTTAASPSAAFAARHFRPFLPPPGQELGQPWWIIPGELSVFTGYLSNNRFYPPPPKGKEVIIHRLLSMFHPRPFVKTRFAPQGTVACLTAISDSYYTVMFRIHAEFQLSEPPDFPFWFSPGQFTGHIILSKDATHIRDFRLFVPNHRSLNVDMEWLYGASETSNMEVDIGYVPQMELEAVGPSVPSVILDEDGNMIDSRLPSGEPLQFVFEEIKWHQELSWEEAARRLEVAMYPFKKVNYLPFTEAFDRARAEKKLVHSILLWGALDDQSCUGSGRTLRETVLESPPILTLLNESFISTWSLVKELEDLQTQQENPLHRQLAGLHLEKYSFPVEMMICLPNGTVVHHINANYFLDITSMKPEDMENNNVFSFSSSFEDPSTATYMQFLREGLRRGLPLLQP.

The segment at 1–24 (MGQARPAARRPHSPDPGAQPAPPR) is disordered. Residues 1–42 (MGQARPAARRPHSPDPGAQPAPPRRRARALALLGALLAAAAA) form the signal peptide. Residues 67-102 (VLGTDGLFLFSSLDTDQDMYISPEEFKPIAEKLTGS) enclose the EF-hand domain. A glycan (N-linked (GlcNAc...) asparagine) is linked at Asn156. Position 428 (Sec428) is a non-standard amino acid, selenocysteine. Asn449 and Asn497 each carry an N-linked (GlcNAc...) asparagine glycan.

Interacts with RYR1, RYR2 and RYR3. N-glycosylated.

The protein resides in the endoplasmic reticulum membrane. Plays an important role in cell protection against oxidative stress and in the regulation of redox-related calcium homeostasis. Regulates the calcium level of the ER by protecting the calcium pump ATP2A2 against the oxidoreductase ERO1A-mediated oxidative damage. Within the ER, ERO1A activity increases the concentration of H(2)O(2), which attacks the luminal thiols in ATP2A2 and thus leads to cysteinyl sulfenic acid formation (-SOH) and SEPN1 reduces the SOH back to free thiol (-SH), thus restoring ATP2A2 activity. Acts as a modulator of ryanodine receptor (RyR) activity: protects RyR from oxidation due to increased oxidative stress, or directly controls the RyR redox state, regulating the RyR-mediated calcium mobilization required for normal muscle development and differentiation. Essential for muscle regeneration and satellite cell maintenance in skeletal muscle. The chain is Selenoprotein N from Mus musculus (Mouse).